We begin with the raw amino-acid sequence, 317 residues long: Melanocyte-stimulating hormone receptor (317 aa).

Residues 1-37 lie on the Extracellular side of the membrane; that stretch reads MPVLGSQRRLLGSLNCTPPATFPLTLAPNRTGPQCLE. N-linked (GlcNAc...) asparagine glycosylation occurs at Asn-29. A helical transmembrane segment spans residues 38 to 63; the sequence is VAIPDGLFLSLGLVSLVENVLVVAAI. Residues 64 to 72 are Cytoplasmic-facing; sequence AKNRNLQSP. The chain crosses the membrane as a helical span at residues 73 to 93; that stretch reads MYYFICCLAMSDLLVSVSNVL. Residues 94–118 lie on the Extracellular side of the membrane; the sequence is ETAVMLLLEAGALAARAAVVQQLDN. The helical transmembrane segment at 119–140 threads the bilayer; sequence VIDVLICGSMVSSLCFLGAIAV. Residues 141-163 are Cytoplasmic-facing; the sequence is DRYISIFYALRYHSVVTLPRAWR. The helical transmembrane segment at 164 to 183 threads the bilayer; sequence IIAAIWVASILTSLLFITYY. Over 184–191 the chain is Extracellular; that stretch reads NHTVVLLC. Residues 192-211 form a helical membrane-spanning segment; sequence LVGFFIAMLALMAVLYVHML. At 212–240 the chain is on the cytoplasmic side; it reads ARACQHARGIARLQKRQRPIHQGFGLKGA. The helical transmembrane segment at 241-266 threads the bilayer; sequence ATLTILLGVFFLCWGPFFLHLSLIVL. Over 267-279 the chain is Extracellular; that stretch reads CPQHPTCGCIFKN. A helical membrane pass occupies residues 280–300; sequence FNLFLALIICNAIVDPLIYAF. At 301–317 the chain is on the cytoplasmic side; sequence RSQELRKTLQEVLQCSW. Cys-315 carries the S-palmitoyl cysteine lipid modification.

Belongs to the G-protein coupled receptor 1 family. In terms of assembly, interacts with MGRN1, but does not undergo MGRN1-mediated ubiquitination; this interaction competes with GNAS-binding and thus inhibits agonist-induced cAMP production. Interacts with OPN3; the interaction results in a decrease in MC1R-mediated cAMP signaling and ultimately a decrease in melanin production in melanocytes.

The protein localises to the cell membrane. Functionally, receptor for MSH (alpha, beta and gamma) and ACTH. The activity of this receptor is mediated by G proteins which activate adenylate cyclase. Mediates melanogenesis, the production of eumelanin (black/brown) and phaeomelanin (red/yellow), via regulation of cAMP signaling in melanocytes. The chain is Melanocyte-stimulating hormone receptor (MC1R) from Cervus elaphus (Red deer).